Reading from the N-terminus, the 113-residue chain is Protein ZEO1 (113 aa).

Residues 1 to 16 (MSEIQNKAETAAQDVQ) are compositionally biased toward polar residues. The segment at 1-96 (MSEIQNKAET…AVSEKKETKK (96 aa)) is disordered. Position 2 is an N-acetylserine (Ser2). Ser2 carries the phosphoserine modification. A coiled-coil region spans residues 2-97 (SEIQNKAETA…VSEKKETKKE (96 aa)). Residues 17–37 (QKLEETKESLQNKGQEVKEQA) show a composition bias toward basic and acidic residues. Glycyl lysine isopeptide (Lys-Gly) (interchain with G-Cter in ubiquitin) cross-links involve residues Lys18 and Lys23. Position 25 is a phosphoserine (Ser25). Glycyl lysine isopeptide (Lys-Gly) (interchain with G-Cter in ubiquitin) cross-links involve residues Lys29 and Lys34. Ser40 is subject to Phosphoserine. Residue Lys45 forms a Glycyl lysine isopeptide (Lys-Gly) (interchain with G-Cter in ubiquitin) linkage. Residue Thr49 is modified to Phosphothreonine. Basic and acidic residues predominate over residues 53–82 (EQVKKEEQNIADGVEQKKTEAANKVEETKK). Glycyl lysine isopeptide (Lys-Gly) (interchain with G-Cter in ubiquitin) cross-links involve residues Lys57 and Lys82.

Interacts with MID2. Phosphorylation of Ser-25 is induced 2-fold in response to mating pheromone.

The protein resides in the cell membrane. In terms of biological role, acts antagonistically to MID2 in signaling cell wall stress to the PKC1-MPK1 cell integrity pathway. This chain is Protein ZEO1 (ZEO1), found in Saccharomyces cerevisiae (strain ATCC 204508 / S288c) (Baker's yeast).